The primary structure comprises 258 residues: UPF0246 protein CJA_0191 (258 aa).

It belongs to the UPF0246 family.

This Cellvibrio japonicus (strain Ueda107) (Pseudomonas fluorescens subsp. cellulosa) protein is UPF0246 protein CJA_0191.